Here is a 272-residue protein sequence, read N- to C-terminus: HMP-PP phosphatase (272 aa).

Asp8 serves as the catalytic Nucleophile. Positions 8, 10, and 212 each coordinate Mg(2+).

This sequence belongs to the HAD-like hydrolase superfamily. Cof family. It depends on Mg(2+) as a cofactor.

The enzyme catalyses 4-amino-2-methyl-5-(diphosphooxymethyl)pyrimidine + H2O = 4-amino-2-methyl-5-(phosphooxymethyl)pyrimidine + phosphate + H(+). Functionally, catalyzes the hydrolysis of 4-amino-2-methyl-5-hydroxymethylpyrimidine pyrophosphate (HMP-PP) to 4-amino-2-methyl-5-hydroxymethylpyrimidine phosphate (HMP-P). The protein is HMP-PP phosphatase of Klebsiella pneumoniae (strain 342).